A 233-amino-acid chain; its full sequence is H-2 class II histocompatibility antigen, A-S alpha chain (233 aa).

The interval 1–88 is alpha-1; the sequence is EDDIEADHVG…KRSNSTPATN (88 aa). Residues 1–195 are Extracellular-facing; that stretch reads EDDIEADHVG…IPAPMSELTE (195 aa). The alpha-2 stretch occupies residues 89-182; the sequence is EAPQATVFPK…GLEEPVLKHW (94 aa). The 93-residue stretch at 91–183 folds into the Ig-like C1-type domain; the sequence is PQATVFPKSP…LEEPVLKHWE (93 aa). Cys111 and Cys167 form a disulfide bridge. The N-linked (GlcNAc...) asparagine glycan is linked to Asn122. The tract at residues 183 to 195 is connecting peptide; that stretch reads EPEIPAPMSELTE. Residues 196 to 221 traverse the membrane as a helical segment; it reads TVVCALGLSVGLVGIVVGTIFIIQGL. Over 222-233 the chain is Cytoplasmic; sequence RSGGTSRHPGPL.

Belongs to the MHC class II family.

Its subcellular location is the membrane. The polypeptide is H-2 class II histocompatibility antigen, A-S alpha chain (H2-Aa) (Mus musculus (Mouse)).